A 625-amino-acid polypeptide reads, in one-letter code: MSKKTNAPVQEFEYKAEMKQLLDLIVHSLYTHPEIFLRELVSNAADALSKARFSSLTDGGLMAAAGEDAIHITLDKEKLLFVIEDSGIGMSEDELIANLGTVAKSGTLGFMQSLQEQKKELDGNLIGQFGVGFYSVFMVTENVTVETRSAQEGSEGLRWQSSGQGTYTIEKVEKKERGTRISFTLKEEYKEFAEEYRVEQVIKKYSNFVDFPIYLGEKQLNSVTALWQRPKSELQEGDVHEFYKFISNDFEDPLDYLSVSVEGAVSFKALLFLPQNAPMELLYRQGELENKGPQLYVKKVMIQNECRDLLPEYLRFIAGVVDTEDLSLNVSREVVQSSPVMAKIRQILTTKILGWFEELAVEQPEKFKTFYKAFGPIVKIGLNTDFTNRDKLIELLRFESTKTGEGEFVTLKEYVARMGGEQKEIYYHSGAGRAQLLANPNLEYFQSRGIEVLLLSDPVDVFVIPSIHEYDSKQLKSIEKADIDFSKEKTEGEEPVAENLLVPLLAKFREALGEDIADVVESHRLVSSPVTIVGGKDAMDSQMERMMKMMQQEMPAAKKVLEVNPRHPIIRNLSGMMIANADNPLINSAIRQLYEGALLLEGDLSSTTGFVQRMNELIEAATLSR.

Residues 1 to 332 (MSKKTNAPVQ…TEDLSLNVSR (332 aa)) are a; substrate-binding. Positions 333–545 (EVVQSSPVMA…KDAMDSQMER (213 aa)) are b. Positions 546-625 (MMKMMQQEMP…ELIEAATLSR (80 aa)) are c.

This sequence belongs to the heat shock protein 90 family. In terms of assembly, homodimer.

It localises to the cytoplasm. In terms of biological role, molecular chaperone. Has ATPase activity. The sequence is that of Chaperone protein HtpG from Chlorobium phaeovibrioides (strain DSM 265 / 1930) (Prosthecochloris vibrioformis (strain DSM 265)).